A 527-amino-acid polypeptide reads, in one-letter code: Glutamate--cysteine ligase (527 aa).

The protein belongs to the glutamate--cysteine ligase type 1 family. Type 1 subfamily.

It catalyses the reaction L-cysteine + L-glutamate + ATP = gamma-L-glutamyl-L-cysteine + ADP + phosphate + H(+). The protein operates within sulfur metabolism; glutathione biosynthesis; glutathione from L-cysteine and L-glutamate: step 1/2. The sequence is that of Glutamate--cysteine ligase from Pseudomonas aeruginosa (strain ATCC 15692 / DSM 22644 / CIP 104116 / JCM 14847 / LMG 12228 / 1C / PRS 101 / PAO1).